A 385-amino-acid polypeptide reads, in one-letter code: 8-amino-7-oxononanoate synthase (385 aa).

Substrate is bound at residue arginine 21. Position 108-109 (108-109 (GF)) interacts with pyridoxal 5'-phosphate. Histidine 133 is a substrate binding site. Positions 179, 207, and 233 each coordinate pyridoxal 5'-phosphate. Lysine 236 is modified (N6-(pyridoxal phosphate)lysine). Threonine 352 is a binding site for substrate.

This sequence belongs to the class-II pyridoxal-phosphate-dependent aminotransferase family. BioF subfamily. Homodimer. Pyridoxal 5'-phosphate serves as cofactor.

The catalysed reaction is 6-carboxyhexanoyl-[ACP] + L-alanine + H(+) = (8S)-8-amino-7-oxononanoate + holo-[ACP] + CO2. The protein operates within cofactor biosynthesis; biotin biosynthesis. Its function is as follows. Catalyzes the decarboxylative condensation of pimeloyl-[acyl-carrier protein] and L-alanine to produce 8-amino-7-oxononanoate (AON), [acyl-carrier protein], and carbon dioxide. In Salmonella typhimurium (strain LT2 / SGSC1412 / ATCC 700720), this protein is 8-amino-7-oxononanoate synthase.